A 438-amino-acid polypeptide reads, in one-letter code: Putative hydroxypyruvate reductase (438 aa).

It carries out the reaction (R)-glycerate + NAD(+) = 3-hydroxypyruvate + NADH + H(+). The enzyme catalyses (R)-glycerate + NADP(+) = 3-hydroxypyruvate + NADPH + H(+). The protein operates within carbohydrate acid metabolism; tartrate degradation; 3-hydroxypyruvate from D-glycerate: step 1/1. Degrades an unidentified toxic product from the first step of tartrate degradation. The sequence is that of Putative hydroxypyruvate reductase (ttuD) from Agrobacterium vitis (Rhizobium vitis).